Consider the following 118-residue polypeptide: Large ribosomal subunit protein bL20 (118 aa).

Belongs to the bacterial ribosomal protein bL20 family.

In terms of biological role, binds directly to 23S ribosomal RNA and is necessary for the in vitro assembly process of the 50S ribosomal subunit. It is not involved in the protein synthesizing functions of that subunit. The sequence is that of Large ribosomal subunit protein bL20 from Campylobacter curvus (strain 525.92).